Consider the following 427-residue polypeptide: 3-phosphoshikimate 1-carboxyvinyltransferase (427 aa).

The 3-phosphoshikimate site is built by Lys-22, Ser-23, and Arg-27. A phosphoenolpyruvate-binding site is contributed by Lys-22. Gly-96 and Arg-124 together coordinate phosphoenolpyruvate. The 3-phosphoshikimate site is built by Ser-169, Ser-170, Gln-171, Ser-197, Asp-313, Asn-336, and Lys-340. Residue Gln-171 participates in phosphoenolpyruvate binding. The Proton acceptor role is filled by Asp-313. Phosphoenolpyruvate-binding residues include Arg-344, Arg-386, and Lys-411.

This sequence belongs to the EPSP synthase family. Monomer.

The protein localises to the cytoplasm. The enzyme catalyses 3-phosphoshikimate + phosphoenolpyruvate = 5-O-(1-carboxyvinyl)-3-phosphoshikimate + phosphate. The protein operates within metabolic intermediate biosynthesis; chorismate biosynthesis; chorismate from D-erythrose 4-phosphate and phosphoenolpyruvate: step 6/7. Functionally, catalyzes the transfer of the enolpyruvyl moiety of phosphoenolpyruvate (PEP) to the 5-hydroxyl of shikimate-3-phosphate (S3P) to produce enolpyruvyl shikimate-3-phosphate and inorganic phosphate. In Salmonella agona (strain SL483), this protein is 3-phosphoshikimate 1-carboxyvinyltransferase.